The sequence spans 194 residues: Large ribosomal subunit protein eL15 (194 aa).

Positions 158–194 (ANRGLTSAGKKGRGLMYKGKGAEKARPGVRANGKKTK) are disordered.

The protein belongs to the eukaryotic ribosomal protein eL15 family.

The sequence is that of Large ribosomal subunit protein eL15 from Methanococcus maripaludis (strain DSM 14266 / JCM 13030 / NBRC 101832 / S2 / LL).